The following is a 519-amino-acid chain: Cobyric acid synthase (519 aa).

Residues 256 to 438 enclose the GATase cobBQ-type domain; that stretch reads WLRVAVPRLP…WHGLFENDAF (183 aa). Cys-337 acts as the Nucleophile in catalysis. His-430 is a catalytic residue.

The protein belongs to the CobB/CobQ family. CobQ subfamily.

The protein operates within cofactor biosynthesis; adenosylcobalamin biosynthesis. Functionally, catalyzes amidations at positions B, D, E, and G on adenosylcobyrinic A,C-diamide. NH(2) groups are provided by glutamine, and one molecule of ATP is hydrogenolyzed for each amidation. This Saccharopolyspora erythraea (strain ATCC 11635 / DSM 40517 / JCM 4748 / NBRC 13426 / NCIMB 8594 / NRRL 2338) protein is Cobyric acid synthase.